The sequence spans 397 residues: Ornithine aminotransferase (397 aa).

An N6-(pyridoxal phosphate)lysine modification is found at lysine 255.

The protein belongs to the class-III pyridoxal-phosphate-dependent aminotransferase family. OAT subfamily. It depends on pyridoxal 5'-phosphate as a cofactor.

The protein localises to the cytoplasm. It catalyses the reaction a 2-oxocarboxylate + L-ornithine = L-glutamate 5-semialdehyde + an L-alpha-amino acid. It participates in amino-acid biosynthesis; L-proline biosynthesis; L-glutamate 5-semialdehyde from L-ornithine: step 1/1. In terms of biological role, catalyzes the interconversion of ornithine to glutamate semialdehyde. The chain is Ornithine aminotransferase from Macrococcus caseolyticus (strain JCSC5402) (Macrococcoides caseolyticum).